Consider the following 118-residue polypeptide: Large ribosomal subunit protein bL19 (118 aa).

The protein belongs to the bacterial ribosomal protein bL19 family.

In terms of biological role, this protein is located at the 30S-50S ribosomal subunit interface and may play a role in the structure and function of the aminoacyl-tRNA binding site. The chain is Large ribosomal subunit protein bL19 from Beutenbergia cavernae (strain ATCC BAA-8 / DSM 12333 / CCUG 43141 / JCM 11478 / NBRC 16432 / NCIMB 13614 / HKI 0122).